A 1502-amino-acid polypeptide reads, in one-letter code: Gem-associated protein 5 (1502 aa).

Positions 1–124 (MKPEPRTLPP…LHWSPTVKDL (124 aa)) are important for interaction with U1 snRNA. The interval 13 to 15 (NWY) is interaction with U4 snRNA. At S48 the chain carries Phosphoserine. WD repeat units follow at residues 62–104 (GHTE…VVTE), 107–148 (LHQH…QHLF), 150–189 (EPRT…EVIH), 193–264 (GHDD…GVMV), 280–321 (TVKE…RRKY), 333–374 (HSRI…CCWT), 377–417 (SLGG…NNYD), 424–464 (GVKS…PPQI), 468–509 (YHKK…VVLQ), 533–573 (RYKL…LLCT), and 576–622 (QHHK…ESNP). S624 is subject to Phosphoserine. 2 WD repeats span residues 637–677 (GHTA…PLFN) and 680–720 (GHRG…HSRP). Disordered stretches follow at residues 740 to 797 (KLKK…SPVV) and 819 to 838 (SSKA…EALL). A Glycyl lysine isopeptide (Lys-Gly) (interchain with G-Cter in SUMO2) cross-link involves residue K754. Residues S757, S770, and S778 each carry the phosphoserine modification. The segment covering 825-838 (LKKEPAKEKPEALL) has biased composition (basic and acidic residues). S845 is subject to Phosphoserine. Disordered regions lie at residues 1309–1338 (VSDK…LSAE) and 1378–1427 (HQKS…SLPE). Residues 1355-1382 (ASLQTSQRTVAEVQETLAEMIRQHQKSQ) are a coiled coil. A compositionally biased stretch (polar residues) spans 1380–1391 (KSQLCKATTNGP). The span at 1392–1407 (SRDEPSRDEPSQEAER) shows a compositional bias: basic and acidic residues.

The protein belongs to the WD repeat gemin-5 family. In terms of assembly, part of the core SMN complex that contains SMN1, GEMIN2/SIP1, DDX20/GEMIN3, GEMIN4, GEMIN5, GEMIN6, GEMIN7, GEMIN8 and STRAP/UNRIP. Part of the SMN-Sm complex that contains SMN1, GEMIN2/SIP1, DDX20/GEMIN3, GEMIN4, GEMIN5, GEMIN6, GEMIN7, GEMIN8, STRAP/UNRIP and the Sm proteins SNRPB, SNRPD1, SNRPD2, SNRPD3, SNRPE, SNRPF and SNRPG. Interacts directly with SMN1, SNRPB, SNRPD1, SNRPD2, SNRPD3 and SNRPE. Identified in a SMN complex that contains GEMIN2/SIP1. Interacts with cytosolic DDX20/GEMIN3 and GEMIN4. Interacts with SNRNP70 and HNRNPU. Identified in a complex with 80S ribosomes; binds to the 60S large ribosomal subunit. Interacts with the ribosomal subunits RPL3 and RPL4.

The protein resides in the nucleus. The protein localises to the nucleoplasm. It localises to the gem. It is found in the cytoplasm. Its function is as follows. The SMN complex catalyzes the assembly of small nuclear ribonucleoproteins (snRNPs), the building blocks of the spliceosome, and thereby plays an important role in the splicing of cellular pre-mRNAs. Most spliceosomal snRNPs contain a common set of Sm proteins SNRPB, SNRPD1, SNRPD2, SNRPD3, SNRPE, SNRPF and SNRPG that assemble in a heptameric protein ring on the Sm site of the small nuclear RNA to form the core snRNP (Sm core). In the cytosol, the Sm proteins SNRPD1, SNRPD2, SNRPE, SNRPF and SNRPG are trapped in an inactive 6S pICln-Sm complex by the chaperone CLNS1A that controls the assembly of the core snRNP. To assemble core snRNPs, the SMN complex accepts the trapped 5Sm proteins from CLNS1A forming an intermediate. Binding of snRNA inside 5Sm ultimately triggers eviction of the SMN complex, thereby allowing binding of SNRPD3 and SNRPB to complete assembly of the core snRNP. Within the SMN complex, GEMIN5 recognizes and delivers the small nuclear RNAs (snRNAs) to the SMN complex. Binds to the 7-methylguanosine cap of RNA molecules. Binds to the 3'-UTR of SMN1 mRNA and regulates its translation; does not affect mRNA stability. May play a role in the regulation of protein synthesis via its interaction with ribosomes. The polypeptide is Gem-associated protein 5 (Gemin5) (Mus musculus (Mouse)).